The following is a 480-amino-acid chain: UDP-glucose 6-dehydrogenase 5 (480 aa).

NAD(+) contacts are provided by residues 8–13, Asp33, Arg38, 86–90, 127–128, and Glu161; these read GAGYVG, VNTPT, and ST. Substrate-binding positions include 157–161, 216–223, and 256–269; these read EFLAE, KLAANAFL, and RIGP…VGFG. The active-site Nucleophile is the Cys272. Position 272–275 (272–275) interacts with NAD(+); it reads CFQK. Residue 334 to 335 participates in substrate binding; sequence FK. Residue Arg342 participates in NAD(+) binding. A Phosphoserine modification is found at Ser393. A substrate-binding site is contributed by Arg447.

The protein belongs to the UDP-glucose/GDP-mannose dehydrogenase family.

It carries out the reaction UDP-alpha-D-glucose + 2 NAD(+) + H2O = UDP-alpha-D-glucuronate + 2 NADH + 3 H(+). The protein operates within nucleotide-sugar biosynthesis; UDP-alpha-D-glucuronate biosynthesis; UDP-alpha-D-glucuronate from UDP-alpha-D-glucose: step 1/1. Functionally, involved in the biosynthesis of UDP-glucuronic acid (UDP-GlcA), providing nucleotide sugars for cell-wall polymers. The sequence is that of UDP-glucose 6-dehydrogenase 5 (UGD5) from Oryza sativa subsp. japonica (Rice).